Reading from the N-terminus, the 343-residue chain is MNALHQKCAVCGRFTTEFNYSVLSCNSCKIFFRRLIVRTVPIKKCFRGERCFEKTPYIFKCTSCRFQKCLYVGMTLPSYLLVLEQNKEQRLAITIDCVRNTHNKRMDSLFNFFVTEMNPNVDDIVELNKITYTKRDEHIRMDFQTWAFHSCVTTIDFMKQFPFVNLLRSTDQMILLKESYVKLGALISATRAYSSKKQCISFPDGTDCLPKTQWTVPKISPNLENRIRCRVIDKLRELNIQNDEFYLLSVLLFCNPAITNLSENGQLLLTSYQKMYSSALLYYCLLTYQKSGPSRFSELLGLFTLLGQHYDDIIHYYVLMQLNQSEVELKKLVKDGIEAAYKS.

The segment at residues 5–81 is a DNA-binding region (nuclear receptor); that stretch reads HQKCAVCGRF…VGMTLPSYLL (77 aa). 2 NR C4-type zinc fingers span residues 8-28 and 45-64; these read CAVCGRFTTEFNYSVLSCNSC and CFRGERCFEKTPYIFKCTSC. The 239-residue stretch at 101-339 folds into the NR LBD domain; it reads THNKRMDSLF…KKLVKDGIEA (239 aa).

Belongs to the nuclear hormone receptor family.

The protein localises to the nucleus. In terms of biological role, orphan nuclear receptor. The sequence is that of Nuclear hormone receptor family member nhr-167 (nhr-167) from Caenorhabditis elegans.